A 143-amino-acid chain; its full sequence is Large ribosomal subunit protein uL11 (143 aa).

The protein belongs to the universal ribosomal protein uL11 family. In terms of assembly, part of the ribosomal stalk of the 50S ribosomal subunit. Interacts with L10 and the large rRNA to form the base of the stalk. L10 forms an elongated spine to which L12 dimers bind in a sequential fashion forming a multimeric L10(L12)X complex. Post-translationally, one or more lysine residues are methylated.

In terms of biological role, forms part of the ribosomal stalk which helps the ribosome interact with GTP-bound translation factors. The protein is Large ribosomal subunit protein uL11 of Burkholderia mallei (strain NCTC 10247).